A 407-amino-acid polypeptide reads, in one-letter code: Indoleamine 2,3-dioxygenase 1 (407 aa).

Position 350 (histidine 350) interacts with heme b. Residues 362–407 (SKKKPTDGDKSEEPSNVESRGTGGTNPMTFLRSVKDTTEKALLSWP) are disordered. Over residues 365 to 374 (KPTDGDKSEE) the composition is skewed to basic and acidic residues.

It belongs to the indoleamine 2,3-dioxygenase family. Monomer. The cofactor is heme b. Highly expressed in epididymis, duodemum, jejunum, ileum, colon and spleen. Highly expressed in epididymis, prostate, duodemum, jejunum, ileum, colon and spleen, not detected in the liver (at protein level). Expressed in tumors only upon exposure to IFN gamma. Constitutively expressed in placenta in trophoblast cells. Expression is restricted to perinuclear regions of primary trophoblast giant cells (TGCs) of fetal origin at mid-gestation (10.5 dpc). After placentation (14 dpc), no IDO expression was detected at the maternal-fetal interface.

The protein localises to the cytoplasm. Its subcellular location is the cytosol. It catalyses the reaction D-tryptophan + O2 = N-formyl-D-kynurenine. It carries out the reaction L-tryptophan + O2 = N-formyl-L-kynurenine. Its activity is regulated as follows. Activity is inhibited by and MTH-trp (methylthiohydantoin-DL-tryptophan), modestly inhibited by L-1MT (1-methyl-L-tryptophan) but not D-1MT (1-methyl-D-tryptophan). Functionally, catalyzes the first and rate limiting step of the catabolism of the essential amino acid tryptophan along the kynurenine pathway. Involved in the peripheral immune tolerance, contributing to maintain homeostasis by preventing autoimmunity or immunopathology that would result from uncontrolled and overreacting immune responses. Tryptophan shortage inhibits T lymphocytes division and accumulation of tryptophan catabolites induces T-cell apoptosis and differentiation of regulatory T-cells. Acts as a suppressor of anti-tumor immunity. Limits the growth of intracellular pathogens by depriving tryptophan. Protects the fetus from maternal immune rejection. This chain is Indoleamine 2,3-dioxygenase 1, found in Mus musculus (Mouse).